The following is a 1785-amino-acid chain: MISTAPLYSGVHNWTSSDRIRMCGINEERRAPLSDEESTTGDCQHFGSQEFCVSSSFSKVELTAVGSGSNARGADPDGSATEKLGHKSEDKPDDPQPKMDYAGNVAEAEGLLVPLSSPGDGLKLPASDSAEASNSRADCSWTPLNTQMSKQVDCSPAGVKALDSRQGVGEKNTFILATLGTGVPVEGTLPLVTTNFSPLPAPICPPAPGSASVPHSVPDAFQVPLSVPAPVPHSGLVPVQVATSVPAPSPPLAPVPALAPAPPSVPTLISDSNPLSVSASVLVPVPASAPPSGPVPLSAPAPAPLSVPVSAPPLALIQAPVPPSAPTLVLAPVPTPVLAPMPASTPPAAPAPPSVPMPTPTPSSGPPSTPTLIPAFAPTPVPAPTPAPIFTPAPTPMPAATPAAIPTSAPIPASFSLSRVCFPAAQAPAMQKVPLSFQPGTVLTPSQPLVYIPPPSCGQPLSVATLPTTLGVSSTLTLPVLPSYLQDRCLPGVLASPELRSYPYAFSVARPLTSDSKLVSLEVNRLPCTSPSGSTTTQPAPDGVPGPLADTSLVTASAKVLPTPQPLLPAPSGSSAPPHPAKMPSGTEQQTEGTSVTFSPLKSPPQLEREMASPPECSEMPLDLSSKSNRQKLPLPNQRKTPPMPVLTPVHTSSKALLSTVLSRSQRTTQAAGGNVTSCLGSTSSPFVIFPEIVRNGDPSTWVKNSTALISTIPGTYVGVANPVPASLLLNKDPNLGLNRDPRHLPKQEPISIIDQGEPKGTGATCGKKGSQAGAEGQPSTVKRYTPARIAPGLPGCQTKELSLWKPTGPANIYPRCSVNGKPTSTQVLPVGWSPYHQASLLSIGISSAGQLTPSQGAPIRPTSVVSEFSGVPSLSSSEAVHGLPEGQPRPGGSFVPEQDPVTKNKTCRIAAKPYEEQVNPVLLTLSPQTGTLALSVQPSGGDIRMNQGPEESESHLCSDSTPKMEGPQGACGLKLAGDTKPKNQVLATYMSHELVLATPQNLPKMPELPLLPHDSHPKELILDVVPSSRRGSSTERPQLGSQVDLGRVKMEKVDGDVVFNLATCFRADGLPVAPQRGQAEVRAKAGQARVKQESVGVFACKNKWQPDDVTESLPPKKMKCGKEKDSEEQQLQPQAKAVVRSSHRPKCRKLPSDPQESTKKSPRGASDSGKEHNGVRGKHKHRKPTKPESQSPGKRADSHEEGSLEKKAKSSFRDFIPVVLSTRTRSQSGSICSSFAGMADSDMGSQEVFPTEEEEEVTPTPAKRRKVRKTQRDTQYRSHHAQDKSLLSQGRRHLWRAREMPWRTEAARQMWDTNEEEEEEEEEGLLKRKKRRRQKSRKYQTGEYLTEQEDEQRRKGRADLKARKQKTSSSQSLEHRLRNRNLLLPNKVQGISDSPNGFLPNNLEEPACLENSEKPSGKRKCKTKHMATVSEEAKGKGRWSQQKTRSPKSPTPVKPTEPCTPSKSRSASSEEASESPTARQIPPEARRLIVNKNAGETLLQRAARLGYKDVVLYCLQKDSEDVNHRDNAGYTALHEACSRGWTDILNILLEHGANVNCSAQDGTRPVHDAVVNDNLETIWLLLSYGADPTLATYSGQTAMKLASSDTMKRFLSDHLSDLQGRAEGDPGVSWDFYSSSVLEEKDGFACDLLHNPPGSSDQEGDDPMEEDDFMFELSDKPLLPCYNLQVSVSRGPCNWFLFSDVLKRLKLSSRIFQARFPHFEITTMPKAEFYRQVASSQLLTPAERPGGLDDRSPPGSSETVELVRYEPDLLRLLGSEVEFQSCNS.

3 disordered regions span residues 65–101 (VGSG…KMDY), 113–137 (VPLS…NSRA), and 343–368 (ASTP…GPPS). The span at 83–97 (KLGHKSEDKPDDPQP) shows a compositional bias: basic and acidic residues. Ser-496 carries the post-translational modification Phosphoserine. Polar residues-rich tracts occupy residues 527-539 (PCTS…TTQP) and 586-600 (GTEQ…TFSP). Disordered stretches follow at residues 527-550 (PCTS…PLAD) and 562-646 (PTPQ…PMPV). Residues Ser-599 and Ser-613 each carry the phosphoserine modification. Lys-747 is covalently cross-linked (Glycyl lysine isopeptide (Lys-Gly) (interchain with G-Cter in SUMO2)). Disordered stretches follow at residues 753-781 (IIDQ…QPST), 876-901 (SSSE…EQDP), and 937-977 (VQPS…LKLA). 2 positions are modified to phosphoserine: Ser-1029 and Ser-1033. A Glycyl lysine isopeptide (Lys-Gly) (interchain with G-Cter in SUMO2) cross-link involves residue Lys-1092. Disordered regions lie at residues 1107 to 1293 (PDDV…QGRR) and 1312 to 1487 (WDTN…PEAR). Ser-1162 is subject to Phosphoserine. Positions 1176–1185 (VRGKHKHRKP) are enriched in basic residues. Residues 1195 to 1213 (KRADSHEEGSLEKKAKSSF) show a composition bias toward basic and acidic residues. The span at 1222-1234 (STRTRSQSGSICS) shows a compositional bias: polar residues. Residues 1271–1284 (TQRDTQYRSHHAQD) show a composition bias toward basic and acidic residues. The segment covering 1314 to 1324 (TNEEEEEEEEE) has biased composition (acidic residues). The Nuclear localization signal signature appears at 1328 to 1336 (KRKKRRRQK). Basic residues predominate over residues 1328–1339 (KRKKRRRQKSRK). Basic and acidic residues predominate over residues 1352-1363 (EQRRKGRADLKA). Over residues 1440–1449 (WSQQKTRSPK) the composition is skewed to polar residues. Low complexity predominate over residues 1461 to 1480 (TPSKSRSASSEEASESPTAR). Position 1476 is a phosphoserine (Ser-1476). ANK repeat units lie at residues 1529–1558 (AGYT…NVNC), 1562–1591 (DGTR…DPTL), and 1595–1623 (SGQT…QGRA). The tract at residues 1668 to 1785 (DDFMFELSDK…SEVEFQSCNS (118 aa)) is PCGF Ub-like fold domain (PUFD); required for the interaction with the KDM2B-SKP1 heterodimeric complex.

This sequence belongs to the BCOR family. In terms of assembly, interacts with PCGF1, forming heterodimers. The PCGF1-BCORL1 heterodimeric complex interacts with the KDM2B-SKP1 heterodimeric complex to form a homotetrameric polycomb repression complex 1 (PRC1.1). Interacts with SKP1. Interacts with CTBP1, HDAC4, HDAC5 and HDAC7. As to expression, detected in testis and prostate. Detected at lower levels in peripheral blood leukocytes and spleen. Mainly expressed in the spermatogonia and primary spermatocytes.

It is found in the nucleus. Its function is as follows. Transcriptional corepressor. May specifically inhibit gene expression when recruited to promoter regions by sequence-specific DNA-binding proteins such as BCL6. This repression may be mediated at least in part by histone deacetylase activities which can associate with this corepressor. In Homo sapiens (Human), this protein is BCL-6 corepressor-like protein 1.